The chain runs to 449 residues: Probable glycine dehydrogenase (decarboxylating) subunit 1 (449 aa).

Belongs to the GcvP family. N-terminal subunit subfamily. In terms of assembly, the glycine cleavage system is composed of four proteins: P, T, L and H. In this organism, the P 'protein' is a heterodimer of two subunits.

The enzyme catalyses N(6)-[(R)-lipoyl]-L-lysyl-[glycine-cleavage complex H protein] + glycine + H(+) = N(6)-[(R)-S(8)-aminomethyldihydrolipoyl]-L-lysyl-[glycine-cleavage complex H protein] + CO2. Its function is as follows. The glycine cleavage system catalyzes the degradation of glycine. The P protein binds the alpha-amino group of glycine through its pyridoxal phosphate cofactor; CO(2) is released and the remaining methylamine moiety is then transferred to the lipoamide cofactor of the H protein. This chain is Probable glycine dehydrogenase (decarboxylating) subunit 1, found in Pyrococcus abyssi (strain GE5 / Orsay).